A 393-amino-acid chain; its full sequence is Short-chain dehydrogenase/reductase family 42E member 1 (393 aa).

Y152 functions as the Proton acceptor in the catalytic mechanism. Position 156 (K156) interacts with NAD(+). Helical transmembrane passes span 282–302 (LPLT…FILG) and 371–391 (GLVI…SVIL).

Belongs to the 3-beta-HSD family.

It localises to the membrane. The sequence is that of Short-chain dehydrogenase/reductase family 42E member 1 (SDR42E1) from Bos taurus (Bovine).